Reading from the N-terminus, the 332-residue chain is Flotillin-like protein FloA (332 aa).

The next 2 helical transmembrane spans lie at 6–26 (LGYLILTFVVLLLLVLFFSFV) and 28–48 (VGLWISAAAADVRVGIFYMIG).

This sequence belongs to the flotillin-like FloA family. In terms of assembly, homooligomerizes.

The protein resides in the cell membrane. It localises to the membrane raft. Found in functional membrane microdomains (FMM) that may be equivalent to eukaryotic membrane rafts. FMMs are highly dynamic and increase in number as cells age. Flotillins are thought to be important factors in membrane fluidity. The protein is Flotillin-like protein FloA of Symbiobacterium thermophilum (strain DSM 24528 / JCM 14929 / IAM 14863 / T).